The sequence spans 220 residues: Protein-L-isoaspartate O-methyltransferase (220 aa).

S68 is a catalytic residue.

It belongs to the methyltransferase superfamily. L-isoaspartyl/D-aspartyl protein methyltransferase family.

It localises to the cytoplasm. The catalysed reaction is [protein]-L-isoaspartate + S-adenosyl-L-methionine = [protein]-L-isoaspartate alpha-methyl ester + S-adenosyl-L-homocysteine. In terms of biological role, catalyzes the methyl esterification of L-isoaspartyl residues in peptides and proteins that result from spontaneous decomposition of normal L-aspartyl and L-asparaginyl residues. It plays a role in the repair and/or degradation of damaged proteins. The sequence is that of Protein-L-isoaspartate O-methyltransferase from Dictyoglomus turgidum (strain DSM 6724 / Z-1310).